The sequence spans 887 residues: Bifunctional uridylyltransferase/uridylyl-removing enzyme (887 aa).

The segment at 1–329 (MKGLNAKPFS…FPDEEAVTTI (329 aa)) is uridylyltransferase. The uridylyl-removing stretch occupies residues 330–686 (INERFQKRGD…TRAAETGAGV (357 aa)). Residues 448–570 (VDEHILMVVR…MRDERHLIAL (123 aa)) enclose the HD domain. ACT domains lie at 687-772 (EVLV…GRLS) and 796-871 (VLSI…PETP). A disordered region spans residues 864–887 (TSPQPETPGKAPGKPSAGDRIIPR).

This sequence belongs to the GlnD family. Mg(2+) serves as cofactor.

It catalyses the reaction [protein-PII]-L-tyrosine + UTP = [protein-PII]-uridylyl-L-tyrosine + diphosphate. The catalysed reaction is [protein-PII]-uridylyl-L-tyrosine + H2O = [protein-PII]-L-tyrosine + UMP + H(+). Its activity is regulated as follows. Uridylyltransferase (UTase) activity is inhibited by glutamine, while glutamine activates uridylyl-removing (UR) activity. In terms of biological role, modifies, by uridylylation and deuridylylation, the PII regulatory proteins (GlnB and homologs), in response to the nitrogen status of the cell that GlnD senses through the glutamine level. Under low glutamine levels, catalyzes the conversion of the PII proteins and UTP to PII-UMP and PPi, while under higher glutamine levels, GlnD hydrolyzes PII-UMP to PII and UMP (deuridylylation). Thus, controls uridylylation state and activity of the PII proteins, and plays an important role in the regulation of nitrogen assimilation and metabolism. This Nitrosospira multiformis (strain ATCC 25196 / NCIMB 11849 / C 71) protein is Bifunctional uridylyltransferase/uridylyl-removing enzyme.